A 211-amino-acid polypeptide reads, in one-letter code: Histidine biosynthesis bifunctional protein HisIE (211 aa).

The segment at 1–107 is phosphoribosyl-AMP cyclohydrolase; that stretch reads MNKLIDFSKG…FNSEIESRFK (107 aa). Residues 108–211 are phosphoribosyl-ATP pyrophosphohydrolase; the sequence is IQALAQTIHQ…KGERKKVQEW (104 aa).

In the N-terminal section; belongs to the PRA-CH family. This sequence in the C-terminal section; belongs to the PRA-PH family.

It is found in the cytoplasm. The catalysed reaction is 1-(5-phospho-beta-D-ribosyl)-ATP + H2O = 1-(5-phospho-beta-D-ribosyl)-5'-AMP + diphosphate + H(+). It catalyses the reaction 1-(5-phospho-beta-D-ribosyl)-5'-AMP + H2O = 1-(5-phospho-beta-D-ribosyl)-5-[(5-phospho-beta-D-ribosylamino)methylideneamino]imidazole-4-carboxamide. It functions in the pathway amino-acid biosynthesis; L-histidine biosynthesis; L-histidine from 5-phospho-alpha-D-ribose 1-diphosphate: step 2/9. The protein operates within amino-acid biosynthesis; L-histidine biosynthesis; L-histidine from 5-phospho-alpha-D-ribose 1-diphosphate: step 3/9. The sequence is that of Histidine biosynthesis bifunctional protein HisIE from Staphylococcus epidermidis (strain ATCC 12228 / FDA PCI 1200).